The sequence spans 370 residues: 3-isopropylmalate dehydrogenase 2 (370 aa).

NAD(+) is bound at residue 77–90 (GPKWDAVPYEVRPE). The substrate site is built by R97, R107, R135, and D226. Residues D226, D250, and D254 each contribute to the Mg(2+) site. Position 290–302 (290–302 (GSAPDIAGKGLAN)) interacts with NAD(+).

The protein belongs to the isocitrate and isopropylmalate dehydrogenases family. LeuB type 1 subfamily. Homodimer. The cofactor is Mg(2+). Mn(2+) serves as cofactor.

It localises to the cytoplasm. It catalyses the reaction (2R,3S)-3-isopropylmalate + NAD(+) = 4-methyl-2-oxopentanoate + CO2 + NADH. It functions in the pathway amino-acid biosynthesis; L-leucine biosynthesis; L-leucine from 3-methyl-2-oxobutanoate: step 3/4. In terms of biological role, catalyzes the oxidation of 3-carboxy-2-hydroxy-4-methylpentanoate (3-isopropylmalate) to 3-carboxy-4-methyl-2-oxopentanoate. The product decarboxylates to 4-methyl-2 oxopentanoate. The chain is 3-isopropylmalate dehydrogenase 2 from Bradyrhizobium diazoefficiens (strain JCM 10833 / BCRC 13528 / IAM 13628 / NBRC 14792 / USDA 110).